The chain runs to 506 residues: Epstein-Barr nuclear antigen leader protein (506 aa).

Disordered regions lie at residues 1–470 (MGDR…PRPP) and 485–506 (FEPP…EDED). Position 35 is a phosphoserine; by host (Ser35).

The protein belongs to the lymphocryptovirus EBNA-LP family. Homooligomer. Interacts with host SP100; this interaction is important for EBNA-LP coactivator activity. Interacts with host HAX1, ERR1 and HSPA2. Interacts with host PRKDC and AKAP8L; these interactions modulate the coactivator function of EBNA-LP. In terms of processing, phosphorylated by the cellular protein kinase cdc2.

It localises to the host nucleus. In terms of biological role, plays an important role in the establishment of B-cell immortalization by acting as an EBNA2 coactivator. This transcriptional activation preferentially enhances the expression of the major viral protein LMP1. The interaction between EBNA-LP and host SP100 correlates with coactivation of EBNA2 and the relocalization of SP100 from PML nuclear bodies into nucleoplasm. This chain is Epstein-Barr nuclear antigen leader protein (EBNA-LP), found in Epstein-Barr virus (strain B95-8) (HHV-4).